The following is a 470-amino-acid chain: Ribulose bisphosphate carboxylase large chain (470 aa).

Substrate-binding residues include Asn115 and Thr165. Lys167 functions as the Proton acceptor in the catalytic mechanism. Lys169 contacts substrate. 3 residues coordinate Mg(2+): Lys193, Asp195, and Glu196. Residue Lys193 is modified to N6-carboxylysine. Residue His286 is the Proton acceptor of the active site. Substrate-binding residues include Arg287, His319, and Ser371.

This sequence belongs to the RuBisCO large chain family. Type I subfamily. Heterohexadecamer of 8 large chains and 8 small chains. The cofactor is Mg(2+).

It is found in the carboxysome. It carries out the reaction 2 (2R)-3-phosphoglycerate + 2 H(+) = D-ribulose 1,5-bisphosphate + CO2 + H2O. The enzyme catalyses D-ribulose 1,5-bisphosphate + O2 = 2-phosphoglycolate + (2R)-3-phosphoglycerate + 2 H(+). RuBisCO catalyzes two reactions: the carboxylation of D-ribulose 1,5-bisphosphate, the primary event in carbon dioxide fixation, as well as the oxidative fragmentation of the pentose substrate in the photorespiration process. Both reactions occur simultaneously and in competition at the same active site. The protein is Ribulose bisphosphate carboxylase large chain of Synechococcus sp. (strain CC9311).